Reading from the N-terminus, the 256-residue chain is Type III pantothenate kinase (256 aa).

6–13 (DVGNTNMV) lines the ATP pocket. Residues tyrosine 100 and 107–110 (GADR) contribute to the substrate site. Aspartate 109 serves as the catalytic Proton acceptor. Position 129 (aspartate 129) interacts with K(+). Residue threonine 132 coordinates ATP. Threonine 184 lines the substrate pocket.

This sequence belongs to the type III pantothenate kinase family. In terms of assembly, homodimer. It depends on NH4(+) as a cofactor. K(+) serves as cofactor.

The protein resides in the cytoplasm. It catalyses the reaction (R)-pantothenate + ATP = (R)-4'-phosphopantothenate + ADP + H(+). The protein operates within cofactor biosynthesis; coenzyme A biosynthesis; CoA from (R)-pantothenate: step 1/5. Catalyzes the phosphorylation of pantothenate (Pan), the first step in CoA biosynthesis. The sequence is that of Type III pantothenate kinase from Clostridioides difficile (strain 630) (Peptoclostridium difficile).